The chain runs to 1190 residues: MPAMVPGWNHGNITRSKAEELLSRAGKDGSFLVRASESIPRAYALCVLFRNCVYTYRILPNEDDKFTVQASEGVPMRFFTKLDQLIEFYKKENMGLVTHLQFPVPLEEEDAIDEPEEDTESVMSPPELPPRNIPVSGGPCEAKDLPLPTENPRAPEVTRLSLSETLFQRLQSMDTSGLPEEHLKAIQDYLSTQLMLDSDFLKTGSSNLPHLKKLTSLLCKELHGEVIRTLPSLESLQRLFDQQLSPGLRPRPQVPGEANPITMVAKLSQLTSLLSSIEDKVKALLHEGSESTNRRSLIPPVTFEVKSESLGIPQKMHLKVDVESGKLIIKKSRDGSEDKFYSHKKILQLIKSQKFLNKLVILVETEKEKILRKEYVFSDSKKREGFCQLLQQMKNKHSEQSEPDMITIFIGTWNMGNAPPPKKITSWFLSKGQGKTRDDSADYIPHDIYVIGTQEDPLGEKEWLEILRHSLQEVTSMTFKTVAIHTLWNIRIVVLAKPEHENRISHICTDNVKTGIANTLGNKGAVGVSFMFNGTSLGFVNSHLTSGSEKKLRRNQNYMNILRFLALGDKKLSPFNITHRFTHLFWLGDLNYRVELPTWEAEAIIQKIKQQQYSDLLAHDQLLLERKEQEVFLHFEEEEITFAPTYRFERLTRDKYAYTKQKATGMKYNLPSWCDRVLWKSYPLVHVVCQSYGSTSDIMTSDHSPVFATFEAGVTSQFVSKNGPGAVDSQGQIEFLACYATLKTKSQTKFYLELHSSCLESFVKSQEGENEEGDEGELVVRFGETLPKLKPIISDPEYLLDQHILISIKSSDSDESYGEGCIALRLETTESQLPIYTPLTHHGEMTGHFRGEIKLQTSEGKMREKLYDFVKTERDESSGMKCLKNLTSHDPMRQWEPAGRVPACGISSLNEIINPNYIGMGPFGQPLHGKSTLSPDQQLTAWSYDQLPKDSSLGPGRGEGPPTPPSQPPLSPKKFSSSTANRGSCPRVQETRPGDLGKVEALPQEDLPLTKPEMFENPLYGSVSPFPKLVPRKEQESPKMMRKEPPPCPDPGVSSPSIMLPKAQEVENVKGTSKQAPVPVFGPTPRIRSFTCSSSAEGRMPSGDKSQGKPKAPASSQAPVPVKRPVKPSRSEMSQQTTPIPAPRPPLPVKSPAVLQLQHSKGRDYRDNTELPHHGKHRQEESLLGRTAMQ.

Positions W8 to V104 constitute an SH2 domain. A compositionally biased stretch (acidic residues) spans A111–E120. Residues A111–P130 form a disordered region. An SH3-binding 1 motif is present at residues P126–R131. Phosphoserine is present on S245. The NPXY motif 1 signature appears at N914–Y917. Y917 carries the post-translational modification Phosphotyrosine. Phosphoserine is present on S934. Position 944 is a phosphotyrosine (Y944). Residues Q946–Q1190 are disordered. Positions P961–S971 are enriched in pro residues. T963 bears the Phosphothreonine mark. Residues S966 and S971 each carry the phosphoserine modification. Positions P969–K974 match the SH3-binding 2 motif. The segment covering Q989–K998 has biased composition (basic and acidic residues). The tract at residues M1014–K1028 is interaction with DAB2. An NPXY motif 2 motif is present at residues N1017 to Y1020. Y1020 carries the post-translational modification Phosphotyrosine. Basic and acidic residues predominate over residues P1031–P1045. The SH3-binding 3 motif lies at P1038–P1049. Residues I1140 to V1149 are compositionally biased toward pro residues. The span at K1161–L1183 shows a compositional bias: basic and acidic residues.

It belongs to the inositol 1,4,5-trisphosphate 5-phosphatase family. As to quaternary structure, interacts with tyrosine phosphorylated forms of SHC1. Interacts with tyrosine phosphorylated form of DOK1. Interacts with tyrosine phosphorylated form of DOK3. Interacts with tyrosine phosphorylated form of SLAMF1/CD150. Interacts with PTPN11/SHP-2 in response to IL-3. Interacts with receptor EPOR. Interacts with receptors MS4A2/FCER1B and FCER1G. Interacts with receptors FCGR2B and FCGR3. Interacts with receptor FCGR2A, leading to regulate gene expression during the phagocytic process. Interacts with GRB2. Interacts with PLCG1. Interacts with tyrosine kinases SRC and TEC. Interacts with c-Met/MET. Interacts with MILR1 (tyrosine-phosphorylated). Can weakly interact (via NPXY motif 2) with DAB2 (via PID domain); the interaction is impaired by tyrosine phosphorylation of the NPXY motif. Interacts (via SH2 domain) with tyrosine phosphorylated KLRC1 (via ITIM). Interacts with MPL/TPOR. Post-translationally, tyrosine phosphorylated by the members of the SRC family after exposure to a diverse array of extracellular stimuli such as cytokines, growth factors, antibodies, chemokines, integrin ligands and hypertonic and oxidative stress. Phosphorylated upon IgG receptor FCGR2B-binding.

Its subcellular location is the cytoplasm. The protein localises to the cell membrane. The protein resides in the membrane raft. It localises to the cytoskeleton. The enzyme catalyses a 1,2-diacyl-sn-glycero-3-phospho-(1D-myo-inositol-3,4,5-trisphosphate) + H2O = a 1,2-diacyl-sn-glycero-3-phospho-(1D-myo-inositol-3,4-bisphosphate) + phosphate. The catalysed reaction is 1D-myo-inositol 1,3,4,5-tetrakisphosphate + H2O = 1D-myo-inositol 1,3,4-trisphosphate + phosphate. It catalyses the reaction a 1,2-diacyl-sn-glycero-3-phospho-(1D-myo-inositol-4,5-bisphosphate) + H2O = a 1,2-diacyl-sn-glycero-3-phospho-(1D-myo-inositol 4-phosphate) + phosphate. With respect to regulation, activated upon translocation to the sites of synthesis of PtdIns(3,4,5)P3 in the membrane. In terms of biological role, phosphatidylinositol (PtdIns) phosphatase that specifically hydrolyzes the 5-phosphate of phosphatidylinositol-3,4,5-trisphosphate (PtdIns(3,4,5)P3) to produce PtdIns(3,4)P2, thereby negatively regulating the PI3K (phosphoinositide 3-kinase) pathways. Also able to hydrolyze the 5-phosphate of phosphatidylinositol-4,5-bisphosphate (PtdIns(4,5)P3) and inositol 1,3,4,5-tetrakisphosphate. Acts as a negative regulator of B-cell antigen receptor signaling. Mediates signaling from the FC-gamma-RIIB receptor (FCGR2B), playing a central role in terminating signal transduction from activating immune/hematopoietic cell receptor systems. Acts as a negative regulator of myeloid cell proliferation/survival and chemotaxis, mast cell degranulation, immune cells homeostasis, integrin alpha-IIb/beta-3 signaling in platelets and JNK signaling in B-cells. Regulates proliferation of osteoclast precursors, macrophage programming, phagocytosis and activation and is required for endotoxin tolerance. Involved in the control of cell-cell junctions, CD32a signaling in neutrophils and modulation of EGF-induced phospholipase C activity. Key regulator of neutrophil migration, by governing the formation of the leading edge and polarization required for chemotaxis. Modulates FCGR3/CD16-mediated cytotoxicity in NK cells. Mediates the activin/TGF-beta-induced apoptosis through its Smad-dependent expression. This is Phosphatidylinositol 3,4,5-trisphosphate 5-phosphatase 1 (Inpp5d) from Rattus norvegicus (Rat).